Reading from the N-terminus, the 434-residue chain is Enolase A (434 aa).

Substrate-binding residues include His-160 and Glu-169. Glu-212 functions as the Proton donor in the catalytic mechanism. 3 residues coordinate Mg(2+): Asp-247, Glu-296, and Asp-321. Glu-296 and Asp-321 together coordinate substrate. Catalysis depends on Lys-346, which acts as the Proton acceptor. Substrate contacts are provided by residues 373 to 376 (SHRS) and Lys-397.

It belongs to the enolase family. As to quaternary structure, homodimer. The cofactor is Mg(2+).

The protein resides in the cytoplasm. The catalysed reaction is (2R)-2-phosphoglycerate = phosphoenolpyruvate + H2O. It participates in carbohydrate degradation; glycolysis; pyruvate from D-glyceraldehyde 3-phosphate: step 4/5. This is Enolase A (enoA) from Dictyostelium discoideum (Social amoeba).